The chain runs to 466 residues: Phytase A (466 aa).

Positions 1 to 19 (MAVLSVLLPITFLLSSVTG) are cleaved as a signal peptide. Cys-30 and Cys-39 are oxidised to a cystine. Residues Gln-49, Tyr-50, Arg-80, His-81, Arg-84, and Thr-87 each coordinate 1D-myo-inositol hexakisphosphate. Cystine bridges form between Cys-70–Cys-413, Cys-214–Cys-464, Cys-263–Cys-281, and Cys-435–Cys-443. His-81 functions as the Nucleophile in the catalytic mechanism. Residues Asn-104 and Asn-119 are each glycosylated (N-linked (GlcNAc...) asparagine). Residue Arg-164 coordinates 1D-myo-inositol hexakisphosphate. Residues Asn-206 and Asn-219 are each glycosylated (N-linked (GlcNAc...) asparagine). Lys-300 is a binding site for 1D-myo-inositol hexakisphosphate. 2 N-linked (GlcNAc...) asparagine glycosylation sites follow: Asn-338 and Asn-351. 1D-myo-inositol hexakisphosphate-binding residues include His-360 and Asp-361. A glycan (N-linked (GlcNAc...) asparagine) is linked at Asn-375.

Belongs to the histidine acid phosphatase family. In terms of assembly, monomer.

It localises to the secreted. It carries out the reaction 1D-myo-inositol hexakisphosphate + H2O = 1D-myo-inositol 1,2,4,5,6-pentakisphosphate + phosphate. The catalysed reaction is 1D-myo-inositol 1,2,4,5,6-pentakisphosphate + H2O = 1D-myo-inositol 1,2,5,6-tetrakisphosphate + phosphate. The enzyme catalyses 1D-myo-inositol 1,2,5,6-tetrakisphosphate + H2O = 1D-myo-inositol 1,2,6-trisphosphate + phosphate. It catalyses the reaction 1D-myo-inositol 1,2,6-trisphosphate + H2O = 1D-myo-inositol 1,2-bisphosphate + phosphate. It carries out the reaction 1D-myo-inositol 1,2-bisphosphate + H2O = 1D-myo-inositol 2-phosphate + phosphate. In terms of biological role, catalyzes the phosphate monoester hydrolysis of phytic acid (myo-inositol hexakisphosphate), which results in the stepwise formation of myo-inositol pentakis-, tetrakis-, tris-, bis-, and monophosphates, as well as the liberation of inorganic phosphate. Myo-inositol 2-monophosphate is the end product. The polypeptide is Phytase A (phyA) (Aspergillus oryzae (strain ATCC 42149 / RIB 40) (Yellow koji mold)).